The following is a 391-amino-acid chain: MCRGLSAVLILLVSLSAQLHVVVGEEAPKPEKEICGLKVGRLLDSVKGWLSVSQQEKCPLNKYCENKIQADQYNLVPLTCIRWRSLNPASPTGSLGGKDVVSKIDAAMSNFKTLFEPMKADLAKLEEEVKRQVLDAWKALEPLQKEVYRSTLASGRIERAVFYSFMEMGDNVKLDNYFQPANVEELLKYAWALPMHKKQRSMYDLIGQLVQSSKSPMLQTLHAVELATVVNPELENRENLLNDQVVQLRDNLYKNSFATLVSIARHFPDHFDTLRQRLFKLPDGSKPGADTLPNIVNFIAQLPSDELRLSSVDLLLQSLTAENGTLVQDPEYVYRLSQLAHAMPSLVDVKAHPDLQQSVDDLMAKFNTPIDGKTLQYFQNIGISPSSSVAT.

An N-terminal signal peptide occupies residues 1–24 (MCRGLSAVLILLVSLSAQLHVVVG). An N-linked (GlcNAc...) asparagine glycan is attached at N323.

Female salivary gland (at protein level). Female saliva (at protein level). Not detected in female midgut, head and carcass (at protein level). Not detected in male tissues (at protein level).

The protein localises to the secreted. In terms of biological role, required for efficient probing on a mammalian host. Alters the local inflammatory response in the host skin following a mosquito bite by suppressing TNF-alpha/TNF expression. Its function is as follows. (Microbial infection) Contributes to optimal transmission of Plasmodium berghei sporozoites to mice. Functionally, (Microbial infection) Contributes to optimal transmission of Plasmodium falciparum sporozoites to mammalian host. The chain is Salivary protein TRIO from Anopheles gambiae (African malaria mosquito).